Consider the following 254-residue polypeptide: tRNA (guanine-N(1)-)-methyltransferase (254 aa).

S-adenosyl-L-methionine-binding positions include Gly113 and 133-138 (IGDYVL).

This sequence belongs to the RNA methyltransferase TrmD family. Homodimer.

The protein resides in the cytoplasm. The catalysed reaction is guanosine(37) in tRNA + S-adenosyl-L-methionine = N(1)-methylguanosine(37) in tRNA + S-adenosyl-L-homocysteine + H(+). Functionally, specifically methylates guanosine-37 in various tRNAs. In Edwardsiella ictaluri (strain 93-146), this protein is tRNA (guanine-N(1)-)-methyltransferase.